The primary structure comprises 228 residues: MPKKAVILYSGGLDSTTCMAIAKAEGFEPYAMSFAYGQRHKAELELAKGNAKPMGAVEHMVVEFDLRKMGGSALTAEIDVPKEGVGNDIPVTYVPARNTIFLSFALGWAETLGAFDIFIGVNALDYSGYPDCRPEYIAAFETMANLATKAGVEGAGRFTIHTPLIHLTKAEIIRKGLSLGVDYGRTHSCYDPTADELACGRCDSCRLRLKGFAEAGMTDPVKYVKGEK.

Residue 9 to 19 coordinates ATP; it reads YSGGLDSTTCM. Cysteine 189, cysteine 199, cysteine 202, and cysteine 205 together coordinate Zn(2+).

This sequence belongs to the QueC family. Zn(2+) serves as cofactor.

It catalyses the reaction 7-carboxy-7-deazaguanine + NH4(+) + ATP = 7-cyano-7-deazaguanine + ADP + phosphate + H2O + H(+). It functions in the pathway purine metabolism; 7-cyano-7-deazaguanine biosynthesis. Catalyzes the ATP-dependent conversion of 7-carboxy-7-deazaguanine (CDG) to 7-cyano-7-deazaguanine (preQ(0)). This chain is 7-cyano-7-deazaguanine synthase, found in Geotalea uraniireducens (strain Rf4) (Geobacter uraniireducens).